The sequence spans 281 residues: Probable short-chain type dehydrogenase/reductase blr2146 (281 aa).

An NAD(+)-binding site is contributed by 10-34 (VVTGAGAGIGKACALAIAREGGRVV). Ser-146 contributes to the substrate binding site. The Proton acceptor role is filled by Tyr-159. The segment at 261–281 (GNSRAARPAGETAEADAAPRC) is disordered.

This sequence belongs to the short-chain dehydrogenases/reductases (SDR) family.

This is Probable short-chain type dehydrogenase/reductase blr2146 from Bradyrhizobium diazoefficiens (strain JCM 10833 / BCRC 13528 / IAM 13628 / NBRC 14792 / USDA 110).